We begin with the raw amino-acid sequence, 499 residues long: Laccase (499 aa).

2 Plastocyanin-like domains span residues 2–127 and 139–281; these read VGPV…FVVY and VDND…ILRY. Residues N51 and N54 are each glycosylated (N-linked (GlcNAc...) asparagine). Positions 64, 66, 109, and 111 each coordinate Cu cation. Cystine bridges form between C85–C488 and C117–C205. A 3'-nitrotyrosine modification is found at Y196. N-linked (GlcNAc...) asparagine glycans are attached at residues N208, N217, N292, and N333. Residues 348 to 470 enclose the Plastocyanin-like 3 domain; that stretch reads SVPVLLQILS…GGFAVVQAED (123 aa). Y372 is subject to 3'-nitrotyrosine. A glycan (N-linked (GlcNAc...) asparagine) is linked at N377. The Cu cation site is built by H395, H398, and H400. N-linked (GlcNAc...) asparagine glycosylation is found at N416 and N436. Cu cation contacts are provided by H452, C453, H454, and H458.

Belongs to the multicopper oxidase family. The cofactor is Cu cation.

The protein localises to the secreted. The catalysed reaction is 4 hydroquinone + O2 = 4 benzosemiquinone + 2 H2O. Its function is as follows. Lignin degradation and detoxification of lignin-derived products. This is Laccase from Trametes maxima (White-rot fungus).